We begin with the raw amino-acid sequence, 70 residues long: Putative membrane protein insertion efficiency factor (70 aa).

This sequence belongs to the UPF0161 family.

The protein resides in the cell membrane. Functionally, could be involved in insertion of integral membrane proteins into the membrane. This is Putative membrane protein insertion efficiency factor from Chloroflexus aurantiacus (strain ATCC 29366 / DSM 635 / J-10-fl).